A 37-amino-acid polypeptide reads, in one-letter code: Cytochrome b6-f complex subunit 5 (37 aa).

A helical transmembrane segment spans residues 5–25 (LLCGIVLGLIPITLAGLFMAA).

This sequence belongs to the PetG family. The 4 large subunits of the cytochrome b6-f complex are cytochrome b6, subunit IV (17 kDa polypeptide, PetD), cytochrome f and the Rieske protein, while the 4 small subunits are PetG, PetL, PetM and PetN. The complex functions as a dimer.

It is found in the cellular thylakoid membrane. Its function is as follows. Component of the cytochrome b6-f complex, which mediates electron transfer between photosystem II (PSII) and photosystem I (PSI), cyclic electron flow around PSI, and state transitions. PetG is required for either the stability or assembly of the cytochrome b6-f complex. This is Cytochrome b6-f complex subunit 5 from Synechococcus elongatus (strain ATCC 33912 / PCC 7942 / FACHB-805) (Anacystis nidulans R2).